Here is a 485-residue protein sequence, read N- to C-terminus: MENLPNHEENDDVGYHQSPGPIDPNDHSASETPVYSTMSTDSFAYHRTCSETSGGGFSDQIDETSSFCTEASPSDWPVLTESNNSASSNFPTVFDLKHNQIETDEHLAVQEISEPELETMKERFSKLLLGEDMSGSGKGVCTAVTISNAITNLYATVFGQNLRLEPLEIEQKTTWKREMNCLLSVCDYIFEFIPKSQNLSNGATVEVMESRPRADIYINLPALRKLDSMLMEALDSFQKTEFWYAEEGSLSMKSTRSATGSFRKVIVQRKEEKWWLPIPLVPLQGLSEKARKQLKSKRESTNQIHKAAMAINSSILGEMDIPDSYMATLPKSGKASTGDAIYRHMTSSGRFSPEKLLDRLKIVSEHEALQLADRVEASMYTWRRKACLNNSKSSWNMVKDLMSITERSDKNYVLAERAESLLFCLKQRYPELSQTSLDICKIHCNKDVGKAVLESYSRVLEGLAFNIVAWIDDVLYVDKTMRGEE.

Positions 1–36 (MENLPNHEENDDVGYHQSPGPIDPNDHSASETPVYS) are disordered. A PRONE domain is found at 107-485 (LAVQEISEPE…YVDKTMRGEE (379 aa)).

In terms of assembly, interacts with ARC10/ROP11. In terms of tissue distribution, expressed in the vascular tissues of roots, leaves, sepals, petals and siliques.

Functionally, guanine-nucleotide exchange factor (GEF) that acts as an activator of Rop (Rho of plants) GTPases by promoting the exchange of GDP for GTP. This is Rop guanine nucleotide exchange factor 2 (ROPGEF2) from Arabidopsis thaliana (Mouse-ear cress).